A 271-amino-acid chain; its full sequence is Tryptophan synthase alpha chain (271 aa).

Catalysis depends on proton acceptor residues glutamate 49 and aspartate 60.

This sequence belongs to the TrpA family. As to quaternary structure, tetramer of two alpha and two beta chains.

The catalysed reaction is (1S,2R)-1-C-(indol-3-yl)glycerol 3-phosphate + L-serine = D-glyceraldehyde 3-phosphate + L-tryptophan + H2O. It participates in amino-acid biosynthesis; L-tryptophan biosynthesis; L-tryptophan from chorismate: step 5/5. In terms of biological role, the alpha subunit is responsible for the aldol cleavage of indoleglycerol phosphate to indole and glyceraldehyde 3-phosphate. This chain is Tryptophan synthase alpha chain, found in Rhizorhabdus wittichii (strain DSM 6014 / CCUG 31198 / JCM 15750 / NBRC 105917 / EY 4224 / RW1) (Sphingomonas wittichii).